Reading from the N-terminus, the 78-residue chain is uncharacterized protein (78 aa).

Positions Met-1 to Gln-78 are disordered. 2 stretches are compositionally biased toward basic and acidic residues: residues Ser-10–Ser-33 and Leu-63–Gln-78.

This is an uncharacterized protein from Schizosaccharomyces pombe (strain 972 / ATCC 24843) (Fission yeast).